The chain runs to 482 residues: tRNA sulfurtransferase (482 aa).

Residues 61–165 form the THUMP domain; sequence DVTLSVLTQT…NDKLNLIIAR (105 aa). ATP is bound by residues 183–184, Lys265, Gly287, and Gln296; that span reads LI. A disulfide bond links Cys344 and Cys456. A Rhodanese domain is found at 404–482; sequence LGSDVVVLDI…GYKNVKVYRP (79 aa). The active-site Cysteine persulfide intermediate is Cys456.

Belongs to the ThiI family.

Its subcellular location is the cytoplasm. The enzyme catalyses [ThiI sulfur-carrier protein]-S-sulfanyl-L-cysteine + a uridine in tRNA + 2 reduced [2Fe-2S]-[ferredoxin] + ATP + H(+) = [ThiI sulfur-carrier protein]-L-cysteine + a 4-thiouridine in tRNA + 2 oxidized [2Fe-2S]-[ferredoxin] + AMP + diphosphate. It carries out the reaction [ThiS sulfur-carrier protein]-C-terminal Gly-Gly-AMP + S-sulfanyl-L-cysteinyl-[cysteine desulfurase] + AH2 = [ThiS sulfur-carrier protein]-C-terminal-Gly-aminoethanethioate + L-cysteinyl-[cysteine desulfurase] + A + AMP + 2 H(+). The protein operates within cofactor biosynthesis; thiamine diphosphate biosynthesis. Catalyzes the ATP-dependent transfer of a sulfur to tRNA to produce 4-thiouridine in position 8 of tRNAs, which functions as a near-UV photosensor. Also catalyzes the transfer of sulfur to the sulfur carrier protein ThiS, forming ThiS-thiocarboxylate. This is a step in the synthesis of thiazole, in the thiamine biosynthesis pathway. The sulfur is donated as persulfide by IscS. The chain is tRNA sulfurtransferase from Aliivibrio fischeri (strain MJ11) (Vibrio fischeri).